Consider the following 451-residue polypeptide: Phosphoglucosamine mutase (451 aa).

Ser-103 serves as the catalytic Phosphoserine intermediate. 4 residues coordinate Mg(2+): Ser-103, Asp-243, Asp-245, and Asp-247. The residue at position 103 (Ser-103) is a Phosphoserine.

It belongs to the phosphohexose mutase family. It depends on Mg(2+) as a cofactor. In terms of processing, activated by phosphorylation.

The enzyme catalyses alpha-D-glucosamine 1-phosphate = D-glucosamine 6-phosphate. In terms of biological role, catalyzes the conversion of glucosamine-6-phosphate to glucosamine-1-phosphate. The protein is Phosphoglucosamine mutase of Levilactobacillus brevis (strain ATCC 367 / BCRC 12310 / CIP 105137 / JCM 1170 / LMG 11437 / NCIMB 947 / NCTC 947) (Lactobacillus brevis).